Consider the following 495-residue polypeptide: Acetyl-coenzyme A carboxylase carboxyl transferase subunit beta, chloroplastic (495 aa).

The interval Ser188 to Leu208 is disordered. One can recognise a CoA carboxyltransferase N-terminal domain in the interval Leu226 to Lys495. Cys230, Cys233, Cys249, and Cys252 together coordinate Zn(2+). Residues Cys230 to Cys252 form a C4-type zinc finger.

Belongs to the AccD/PCCB family. As to quaternary structure, acetyl-CoA carboxylase is a heterohexamer composed of biotin carboxyl carrier protein, biotin carboxylase and 2 subunits each of ACCase subunit alpha and ACCase plastid-coded subunit beta (accD). It depends on Zn(2+) as a cofactor.

It localises to the plastid. It is found in the chloroplast stroma. The catalysed reaction is N(6)-carboxybiotinyl-L-lysyl-[protein] + acetyl-CoA = N(6)-biotinyl-L-lysyl-[protein] + malonyl-CoA. It participates in lipid metabolism; malonyl-CoA biosynthesis; malonyl-CoA from acetyl-CoA: step 1/1. In terms of biological role, component of the acetyl coenzyme A carboxylase (ACC) complex. Biotin carboxylase (BC) catalyzes the carboxylation of biotin on its carrier protein (BCCP) and then the CO(2) group is transferred by the transcarboxylase to acetyl-CoA to form malonyl-CoA. In Nicotiana tomentosiformis (Tobacco), this protein is Acetyl-coenzyme A carboxylase carboxyl transferase subunit beta, chloroplastic.